Consider the following 282-residue polypeptide: F-actin-capping protein subunit beta (282 aa).

A disordered region spans residues 73-103; that stretch reads SPWSNQFDPPLDEAGSGGVGAGGNEGAGEGA. Residues 87–101 show a composition bias toward gly residues; sequence GSGGVGAGGNEGAGE.

Belongs to the F-actin-capping protein beta subunit family. Component of the F-actin capping complex, composed of a heterodimer of an alpha and a beta subunit.

The protein resides in the cytoplasm. Its subcellular location is the cytoskeleton. It localises to the actin patch. Its function is as follows. F-actin-capping proteins bind in a Ca(2+)-independent manner to the fast growing ends of actin filaments (barbed end) thereby blocking the exchange of subunits at these ends. Unlike other capping proteins (such as gelsolin and severin), these proteins do not sever actin filaments. This is F-actin-capping protein subunit beta (CAP2) from Gibberella zeae (strain ATCC MYA-4620 / CBS 123657 / FGSC 9075 / NRRL 31084 / PH-1) (Wheat head blight fungus).